The primary structure comprises 220 residues: Thiamine-phosphate synthase (220 aa).

4-amino-2-methyl-5-(diphosphooxymethyl)pyrimidine is bound by residues 46-50 and asparagine 83; that span reads QFREK. Residues aspartate 84 and aspartate 103 each contribute to the Mg(2+) site. Position 122 (serine 122) interacts with 4-amino-2-methyl-5-(diphosphooxymethyl)pyrimidine. 149-151 contacts 2-[(2R,5Z)-2-carboxy-4-methylthiazol-5(2H)-ylidene]ethyl phosphate; it reads TNS. Lysine 152 contributes to the 4-amino-2-methyl-5-(diphosphooxymethyl)pyrimidine binding site. 2-[(2R,5Z)-2-carboxy-4-methylthiazol-5(2H)-ylidene]ethyl phosphate contacts are provided by residues glycine 181 and 201-202; that span reads IS.

This sequence belongs to the thiamine-phosphate synthase family. Mg(2+) is required as a cofactor.

The catalysed reaction is 2-[(2R,5Z)-2-carboxy-4-methylthiazol-5(2H)-ylidene]ethyl phosphate + 4-amino-2-methyl-5-(diphosphooxymethyl)pyrimidine + 2 H(+) = thiamine phosphate + CO2 + diphosphate. It catalyses the reaction 2-(2-carboxy-4-methylthiazol-5-yl)ethyl phosphate + 4-amino-2-methyl-5-(diphosphooxymethyl)pyrimidine + 2 H(+) = thiamine phosphate + CO2 + diphosphate. The enzyme catalyses 4-methyl-5-(2-phosphooxyethyl)-thiazole + 4-amino-2-methyl-5-(diphosphooxymethyl)pyrimidine + H(+) = thiamine phosphate + diphosphate. Its pathway is cofactor biosynthesis; thiamine diphosphate biosynthesis; thiamine phosphate from 4-amino-2-methyl-5-diphosphomethylpyrimidine and 4-methyl-5-(2-phosphoethyl)-thiazole: step 1/1. In terms of biological role, condenses 4-methyl-5-(beta-hydroxyethyl)thiazole monophosphate (THZ-P) and 2-methyl-4-amino-5-hydroxymethyl pyrimidine pyrophosphate (HMP-PP) to form thiamine monophosphate (TMP). The protein is Thiamine-phosphate synthase of Mannheimia succiniciproducens (strain KCTC 0769BP / MBEL55E).